The following is a 229-amino-acid chain: Claudin-25 (229 aa).

Topologically, residues methionine 1–glutamine 10 are cytoplasmic. Residues leucine 11–proline 31 form a helical membrane-spanning segment. The Extracellular segment spans residues glutamine 32 to arginine 81. A helical membrane pass occupies residues isoleucine 82–serine 102. Topologically, residues glutamate 103–threonine 124 are cytoplasmic. A helical membrane pass occupies residues leucine 125–isoleucine 145. Residues glutamine 146 to glycine 164 lie on the Extracellular side of the membrane. A helical transmembrane segment spans residues alanine 165–phenylalanine 185. Residues serine 186–isoleucine 229 lie on the Cytoplasmic side of the membrane.

Belongs to the claudin family.

The protein localises to the cell junction. Its subcellular location is the tight junction. The protein resides in the cell membrane. Functionally, plays a major role in tight junction-specific obliteration of the intercellular space, through calcium-independent cell-adhesion activity. This is Claudin-25 (CLDN25) from Homo sapiens (Human).